Consider the following 119-residue polypeptide: Large ribosomal subunit protein bL20 (119 aa).

Belongs to the bacterial ribosomal protein bL20 family.

In terms of biological role, binds directly to 23S ribosomal RNA and is necessary for the in vitro assembly process of the 50S ribosomal subunit. It is not involved in the protein synthesizing functions of that subunit. This Colwellia psychrerythraea (strain 34H / ATCC BAA-681) (Vibrio psychroerythus) protein is Large ribosomal subunit protein bL20.